A 441-amino-acid chain; its full sequence is MSPRPLRALLGAAAAALVSAAALAFPSQAAANDSPFYVNPNMSSAEWVRNNPNDPRTPVIRDRIASVPQGTWFAHHNPGQITGQVDALMSAAQAAGKIPILVVYNAPGRDCGNHSSGGAPSHSAYRSWIDEFAAGLKNRPAYIIVEPDLISLMSSCMQHVQQEVLETMAYAGKALKAGSSQARIYFDAGHSAWHSPAQMASWLQQADISNSAHGIATNTSNYRWTADEVAYAKAVLSAIGNPSLRAVIDTSRNGNGPAGNEWCDPSGRAIGTPSTTNTGDPMIDAFLWIKLPGEADGCIAGAGQFVPQAAYEMAIAAGGTNPNPNPNPTPTPTPTPTPPPGSSGACTATYTIANEWNDGFQATVTVTANQNITGWTVTWTFTDGQTITNAWNADVSTSGSSVTARNVGHNGTLSQGASTEFGFVGSKGNSNSVPTLTCAAS.

The segment at residues 1–31 is a signal peptide (tat-type signal); it reads MSPRPLRALLGAAAAALVSAAALAFPSQAAA. The interval 32–320 is catalytic; it reads NDSPFYVNPN…YEMAIAAGGT (289 aa). Residue Asp-110 is part of the active site. 2 disulfide bridges follow: Cys-111-Cys-156 and Cys-263-Cys-298. The active-site Proton donor is the Asp-148. The Nucleophile role is filled by Asp-296. Positions 317–343 are disordered; sequence AGGTNPNPNPNPTPTPTPTPTPPPGSS. The segment at 321 to 340 is linker; it reads NPNPNPNPTPTPTPTPTPPP. Pro residues predominate over residues 323–341; it reads NPNPNPTPTPTPTPTPPPG. Residues 339–441 enclose the CBM2 domain; sequence PPGSSGACTA…SVPTLTCAAS (103 aa). Cys-346 and Cys-438 are joined by a disulfide.

This sequence belongs to the glycosyl hydrolase 6 (cellulase B) family. As to quaternary structure, homodimer. In terms of processing, predicted to be exported by the Tat system. The position of the signal peptide cleavage has been experimentally proven.

The catalysed reaction is Endohydrolysis of (1-&gt;4)-beta-D-glucosidic linkages in cellulose, lichenin and cereal beta-D-glucans.. It participates in glycan metabolism; cellulose degradation. This chain is Endoglucanase E-2 (celB), found in Thermobifida fusca (Thermomonospora fusca).